The primary structure comprises 302 residues: tRNA pseudouridine synthase B (302 aa).

Catalysis depends on Asp-45, which acts as the Nucleophile.

This sequence belongs to the pseudouridine synthase TruB family. Type 1 subfamily.

The catalysed reaction is uridine(55) in tRNA = pseudouridine(55) in tRNA. Its function is as follows. Responsible for synthesis of pseudouridine from uracil-55 in the psi GC loop of transfer RNAs. The sequence is that of tRNA pseudouridine synthase B from Francisella tularensis subsp. tularensis (strain WY96-3418).